Here is a 4244-residue protein sequence, read N- to C-terminus: Tenascin-X (4244 aa).

Residues 1 to 23 (MMPAQYALTSSLVLLVLLSTARA) form the signal peptide. Residues 27 to 57 (SSRSNVTLPAPRPPPQPGGHTVGAGVGSPSS) are disordered. The N-linked (GlcNAc...) asparagine glycan is linked to Asn-31. Residues 156 to 168 (CSCEPGWGGPTCS) enclose the EGF-like 1; incomplete domain. The disordered stretch occupies residues 169–189 (DPTDAEIPPSSPPSASGSCPD). 18 EGF-like domains span residues 183-213 (ASGS…GPSC), 214-244 (GWPS…GPDC), 245-275 (SQRS…GDDC), 276-306 (GMRS…GEDC), 307-337 (GVRS…GEDC), 338-368 (GTRS…GEDC), 369-399 (STRT…GDDC), 400-430 (GVRS…GTDC), 431-461 (GSRA…GEDC), 462-492 (GVRS…GRDC), 493-523 (GTRA…GEDC), 524-554 (GSRR…GEDC), 555-585 (STRS…GEDC), 586-616 (GVRQ…SEDC), 617-647 (SIRT…GPTC), 648-679 (ATRM…EDCG), 684-714 (PASA…GPDC), and 715-746 (AIQT…EDCG). 54 disulfide bridges follow: Cys-187-Cys-197, Cys-191-Cys-202, Cys-204-Cys-213, Cys-218-Cys-228, Cys-222-Cys-233, Cys-235-Cys-244, Cys-249-Cys-259, Cys-253-Cys-264, Cys-266-Cys-275, Cys-280-Cys-290, Cys-284-Cys-295, Cys-297-Cys-306, Cys-311-Cys-321, Cys-315-Cys-326, Cys-328-Cys-337, Cys-342-Cys-352, Cys-346-Cys-357, Cys-359-Cys-368, Cys-373-Cys-383, Cys-377-Cys-388, Cys-390-Cys-399, Cys-404-Cys-414, Cys-408-Cys-419, Cys-421-Cys-430, Cys-435-Cys-445, Cys-439-Cys-450, Cys-452-Cys-461, Cys-466-Cys-476, Cys-470-Cys-481, Cys-483-Cys-492, Cys-497-Cys-507, Cys-501-Cys-512, Cys-514-Cys-523, Cys-528-Cys-538, Cys-532-Cys-543, Cys-545-Cys-554, Cys-559-Cys-569, Cys-563-Cys-574, Cys-576-Cys-585, Cys-590-Cys-600, Cys-594-Cys-605, Cys-607-Cys-616, Cys-621-Cys-631, Cys-625-Cys-636, Cys-638-Cys-647, Cys-652-Cys-662, Cys-656-Cys-667, Cys-669-Cys-678, Cys-688-Cys-698, Cys-692-Cys-703, Cys-705-Cys-714, Cys-719-Cys-729, Cys-723-Cys-734, and Cys-736-Cys-745. A disordered region spans residues 926–956 (TGSSPLGLLGTTDEPPPSGPSTTQGAQAPLL). Fibronectin type-III domains lie at 959 to 1051 (RPQE…IMDK), 1064 to 1153 (RLGE…PQSD), 1161 to 1249 (HLGN…APER), 1263 to 1352 (LLGE…PQED), 1374 to 1468 (LLGE…TPPA), 1476 to 1572 (RLGE…TEAS), 1574 to 1669 (PPLE…RGDA), 1674 to 1764 (PPRL…ARSA), 1778 to 1868 (LGEE…REET), and 1883 to 1971 (HLGE…VPEE). A disordered region spans residues 1340–1372 (PESVVAKTAPQEDVDETPSPTELGTEAPESPEE). Residues 1666 to 1668 (RGD) carry the Cell attachment site motif. The interval 1752-1777 (PLTADGTTEARSAMDDTGTKRPPKPR) is disordered. The interval 1968–1990 (VPEEEKPSEPPTATPEPPIKPRL) is disordered. Residues 1976 to 1987 (EPPTATPEPPIK) show a composition bias toward pro residues. Fibronectin type-III domains lie at 1989-2089 (RLGE…SMEA), 2097-2185 (LLGE…APEE), 2196-2296 (RLGQ…TEPP), 2305-2398 (RLEE…TPSP), and 2408-2502 (PPEE…PQED). Residues 2281–2304 (APGKDEEMAPASTEPPTPEPPIKP) form a disordered region. Positions 2495–2542 (GVTAPQEDVDETPSPTEPGTEAPGPPEEPLLGELTVTGSSPDSLSLSW) are disordered. Residues 2506-2516 (TPSPTEPGTEA) show a composition bias toward low complexity. Fibronectin type-III domains follow at residues 2519 to 2617 (PPEE…TTQA), 2625 to 2723 (PPIK…TPSP), 2733 to 2840 (PPEE…TTPE), 2841 to 2939 (PPNK…TPAP), 2949 to 3042 (PPEE…APKD), 3062 to 3153 (RLGE…TPSP), 3168 to 3260 (LLGE…TPLP), 3264 to 3355 (RLGE…TKPS), 3357 to 3446 (RLGE…PLEK), 3451 to 3544 (HLGE…TPAP), 3553 to 3647 (PPEE…LAPA), 3657 to 3754 (RLSQ…TLSP), 3758 to 3847 (SPRD…VPDG), 3848 to 3934 (PTQL…TGLE), and 3935 to 4025 (APRD…LRIP). The segment covering 2530-2542 (VTGSSPDSLSLSW) has biased composition (polar residues). 2 disordered regions span residues 2824-2847 (PEDE…KPRL) and 2933-2969 (EEET…DSLS). Low complexity predominate over residues 2937–2946 (PAPTEPSTEA). Polar residues predominate over residues 2960-2969 (VTGSSPDSLS). Disordered stretches follow at residues 3536–3559 (APEE…EPRL) and 3636–3662 (LSAE…SQLS). 3 N-linked (GlcNAc...) asparagine glycosylation sites follow: Asn-3855, Asn-3908, and Asn-3920. Positions 4021-4236 (GLRIPFPRDC…FTEMKLRPRN (216 aa)) constitute a Fibrinogen C-terminal domain. An intrachain disulfide couples Cys-4030 to Cys-4060. N-linked (GlcNAc...) asparagine glycosylation occurs at Asn-4095. Cys-4182 and Cys-4195 are oxidised to a cystine.

This sequence belongs to the tenascin family. Homotrimer. Interacts with type I, III and V collagens and tropoelastin via its 29th fibronectin type-III domain. Highly expressed in fetal adrenal, in fetal testis, fetal smooth, striated and cardiac muscle. Isoform XB-short is only expressed in the adrenal gland.

Its subcellular location is the secreted. The protein resides in the extracellular space. It localises to the extracellular matrix. Its function is as follows. Appears to mediate interactions between cells and the extracellular matrix. Substrate-adhesion molecule that appears to inhibit cell migration. Accelerates collagen fibril formation. May play a role in supporting the growth of epithelial tumors. This is Tenascin-X from Homo sapiens (Human).